The primary structure comprises 218 residues: Zinc finger CCHC-type and RNA-binding motif-containing protein 1 (218 aa).

The region spanning 10 to 88 (STVYVSNLPF…RAIKASIAKD (79 aa)) is the RRM domain. The CCHC-type zinc finger occupies 105-122 (SRCYECGDTGHLSYACPK). A disordered region spans residues 119–218 (ACPKNMLGER…YFSDEDELSD (100 aa)). Positions 132-188 (QKKEKKKRKRLVEEEEEEVVEEEESEDEGEDPALDSLSQAIAFQQARIDEEKNKYRH) form a coiled coil. Positions 144-164 (EEEEEEVVEEEESEDEGEDPA) are enriched in acidic residues. A compositionally biased stretch (basic and acidic residues) spans 178-201 (RIDEEKNKYRHDPAEASTSEDSRR).

As to quaternary structure, component of the U11/U12 snRNPs that are part of the U12-type spliceosome.

Its subcellular location is the nucleus. The protein is Zinc finger CCHC-type and RNA-binding motif-containing protein 1 (zcrb1) of Xenopus laevis (African clawed frog).